The chain runs to 317 residues: Melanocyte-stimulating hormone receptor (317 aa).

At 1-37 (MPALGSPRRLLGSLNCTPPATLPLTLAPNRTGPQCLE) the chain is on the extracellular side. N29 is a glycosylation site (N-linked (GlcNAc...) asparagine). Residues 38-63 (VSIPDGLFLSLGLVSLVENVLVVAAI) traverse the membrane as a helical segment. The Cytoplasmic portion of the chain corresponds to 64-72 (AKNRNLHSP). Residues 73-93 (MYYFICCLAMSDLLVSVSNVL) form a helical membrane-spanning segment. At 94–118 (ETAVMLLLEAGVLATRAAVVQQLDN) the chain is on the extracellular side. Residues 119-140 (VIDVLICSSMVSSLCFLGAIAV) form a helical membrane-spanning segment. The Cytoplasmic portion of the chain corresponds to 141-163 (DRYISIFYALRYHSVVTLPRAWR). The chain crosses the membrane as a helical span at residues 164–183 (IIAAIWVASILTSVLSITYY). Over 184 to 191 (NHTVVLLC) the chain is Extracellular. The helical transmembrane segment at 192–211 (LVGFFIAMLALMAVLYVHML) threads the bilayer. At 212-240 (ARACQHARGIARLQKRQRPIHQGFGLKGA) the chain is on the cytoplasmic side. The chain crosses the membrane as a helical span at residues 241-266 (ATLTILLGVFFLCWGPFFLHLSLIVL). At 267-279 (CPQHPTCGCIFKN) the chain is on the extracellular side. The chain crosses the membrane as a helical span at residues 280 to 300 (FNLFLALIICNAIVDPLIYAF). The Cytoplasmic portion of the chain corresponds to 301–317 (RSQELRKTLQEVLQCSW). A lipid anchor (S-palmitoyl cysteine) is attached at C315.

Belongs to the G-protein coupled receptor 1 family. Interacts with MGRN1, but does not undergo MGRN1-mediated ubiquitination; this interaction competes with GNAS-binding and thus inhibits agonist-induced cAMP production. Interacts with OPN3; the interaction results in a decrease in MC1R-mediated cAMP signaling and ultimately a decrease in melanin production in melanocytes.

It localises to the cell membrane. Functionally, receptor for MSH (alpha, beta and gamma) and ACTH. The activity of this receptor is mediated by G proteins which activate adenylate cyclase. Mediates melanogenesis, the production of eumelanin (black/brown) and phaeomelanin (red/yellow), via regulation of cAMP signaling in melanocytes. The protein is Melanocyte-stimulating hormone receptor (MC1R) of Capra hircus (Goat).